The primary structure comprises 144 residues: Cytochrome c'' (144 aa).

Positions 1 to 20 are cleaved as a signal peptide; the sequence is MKIKTIIAVFGVLFSAHALA. Heme c is bound by residues C69, C72, H73, and H115. An intrachain disulfide couples C116 to C124.

As to quaternary structure, monomer. Post-translationally, binds 1 heme c group covalently per subunit. The heme is low-spin in the oxidized state but switches to a high-spin form upon reduction, due to the dissociation of one of the axial histidines, His-115.

The sequence is that of Cytochrome c'' (cycA) from Methylophilus methylotrophus (Bacterium W3A1).